Here is a 1008-residue protein sequence, read N- to C-terminus: Kinesin-like protein KIN-5C (1008 aa).

The region spanning 12 to 359 is the Kinesin motor domain; that stretch reads NVQVLLRCRP…LDYAHRAKSI (348 aa). ATP is bound at residue 98–105; it reads GQTGTGKT. Positions 402–459 form a coiled coil; the sequence is KDRYQQEENERKAMADQIEQMTTSLEANQKQINDLQEKYDSELQHSADLSKKLEATEK. Disordered stretches follow at residues 910-931, 943-962, and 975-1008; these read VEAH…TAGI, YKDY…EVPS, and ESLM…TINN. Residues 913 to 925 are compositionally biased toward basic and acidic residues; the sequence is HLGESQHLQESHS. Residues 979 to 995 show a composition bias toward basic and acidic residues; sequence DEFRENHPYEPSKDRRP.

It belongs to the TRAFAC class myosin-kinesin ATPase superfamily. Kinesin family. KIN-5/BimC subfamily.

The protein localises to the cytoplasm. Its subcellular location is the cytoskeleton. The protein resides in the spindle. In terms of biological role, responsible for microtubule translocation. May be important for the organization of phragmoplast-specific arrays of microtubules. Plays an essential role in stabilizing the mitotic spindle. Required during mitotic cytokinesis. The polypeptide is Kinesin-like protein KIN-5C (Oryza sativa subsp. japonica (Rice)).